Reading from the N-terminus, the 153-residue chain is ORM1-like protein 3 (153 aa).

Residues 1–17 are important for ceramide level-sensing; sequence MNVGTAHSEVNPNTRVM. The Cytoplasmic portion of the chain corresponds to 1–21; the sequence is MNVGTAHSEVNPNTRVMNSRG. 2 helical membrane passes run 22 to 42 and 43 to 63; these read IWLS…SIPF and VSVP…MYIF. At 64 to 94 the chain is on the cytoplasmic side; sequence LHTVKGTPFETPDQGKARLLTHWEQMDYGVQ. The helical transmembrane segment at 95–117 threads the bilayer; that stretch reads FTASRKFLTITPIVLYFLTSFYT. The Extracellular segment spans residues 118 to 121; that stretch reads KYDQ. Residues 122-142 form a helical membrane-spanning segment; sequence VHFILNTVSLMSVLIPKLPQL. The residue at position 137 (P137) is a Hydroxyproline. Topologically, residues 143–153 are cytoplasmic; sequence HGVRIFGINKY.

This sequence belongs to the ORM family. As to quaternary structure, ceramide-sensitive subunit of the serine palmitoyltransferase (SPT) complex, which is also composed of SPTLC1, SPTLC2/3 and SPTSSA/B. In terms of processing, when hydroxylated at Pro-137, ubiquitinated via 'Lys-48'-linkage, leading to proteasomal degradation. In endothelial cells, ORMDL3 proteasomal degradation is controlled by the sphingosine 1-phosphate receptor signaling pathway.

The protein resides in the endoplasmic reticulum membrane. Functionally, plays an essential role in the homeostatic regulation of sphingolipid de novo biosynthesis by modulating the activity of the serine palmitoyltransferase (SPT) in response to ceramide levels. When complexed to SPT, the binding of ceramides to its N-terminus stabilizes a conformation that block SPT substrate entry, hence preventing SPT catalytic activity. Through this mechanism, maintains ceramide levels at sufficient concentrations for the production of complex sphingolipids, but which prevents the accumulation of ceramides to levels that trigger apoptosis. This chain is ORM1-like protein 3 (Ormdl3), found in Rattus norvegicus (Rat).